We begin with the raw amino-acid sequence, 393 residues long: Zinc finger CCHC domain-containing protein 18 (393 aa).

Disordered regions lie at residues 281-300 (VEPE…RGTA) and 313-341 (DDFD…RTRK). 2 stretches are compositionally biased toward polar residues: residues 291-300 (PGASSLRGTA) and 320-331 (PSTSSGSGQRNN). A CCHC-type zinc finger spans residues 346 to 363 (IRCPHCGEEGHAKETCDN).

This sequence belongs to the ZCCHC12 family.

The chain is Zinc finger CCHC domain-containing protein 18 from Mus musculus (Mouse).